The following is a 35-amino-acid chain: Photosystem II reaction center protein M (35 aa).

A helical membrane pass occupies residues 5-25; the sequence is ILGLIATALFILIPTSFLIIL.

It belongs to the PsbM family. PSII is composed of 1 copy each of membrane proteins PsbA, PsbB, PsbC, PsbD, PsbE, PsbF, PsbH, PsbI, PsbJ, PsbK, PsbL, PsbM, PsbT, PsbX, PsbY, PsbZ, Psb30/Ycf12, at least 3 peripheral proteins of the oxygen-evolving complex and a large number of cofactors. It forms dimeric complexes.

The protein localises to the plastid. Its subcellular location is the chloroplast thylakoid membrane. Its function is as follows. One of the components of the core complex of photosystem II (PSII). PSII is a light-driven water:plastoquinone oxidoreductase that uses light energy to abstract electrons from H(2)O, generating O(2) and a proton gradient subsequently used for ATP formation. It consists of a core antenna complex that captures photons, and an electron transfer chain that converts photonic excitation into a charge separation. This subunit is found at the monomer-monomer interface. This Oltmannsiellopsis viridis (Marine flagellate) protein is Photosystem II reaction center protein M.